A 375-amino-acid chain; its full sequence is Growth/differentiation factor 8 (375 aa).

A signal peptide spans 1-18; the sequence is MQRLQICVYIYLFVLIVA. A propeptide spanning residues 19-266 is cleaved from the precursor; the sequence is GPVDLSENSE…VTDTPKRSRR (248 aa). N-linked (GlcNAc...) asparagine glycosylation is present at asparagine 71. 3 cysteine pairs are disulfide-bonded: cysteine 281–cysteine 340, cysteine 309–cysteine 372, and cysteine 313–cysteine 374.

This sequence belongs to the TGF-beta family. As to quaternary structure, homodimer; disulfide-linked. Interacts with WFIKKN2, leading to inhibit its activity. Interacts with FSTL3. Post-translationally, synthesized as large precursor molecule that undergoes proteolytic cleavage to generate an N-terminal propeptide and a disulfide linked C-terminal dimer, which is the biologically active molecule. The circulating form consists of a latent complex of the C-terminal dimer and other proteins, including its propeptide, which maintain the C-terminal dimer in a latent, inactive state. Ligand activation requires additional cleavage of the prodomain by a tolloid-like metalloproteinase.

The protein localises to the secreted. Its function is as follows. Acts specifically as a negative regulator of skeletal muscle growth. This is Growth/differentiation factor 8 (MSTN) from Vulpes vulpes (Red fox).